Consider the following 808-residue polypeptide: Sucrose synthase isoform 1 (808 aa).

The tract at residues 277–754 (MVFNVVILSP…GLKRIQEKYT (478 aa)) is GT-B glycosyltransferase.

The protein belongs to the glycosyltransferase 1 family. Plant sucrose synthase subfamily. In terms of assembly, homotetramer. Expressed in stems, in roots at different developmental stages, and in flower buds, flowers and maturing seeds, with the highest levels in strong utilization sinks for sucrose such as growing stems and tap root tips.

It catalyses the reaction an NDP-alpha-D-glucose + D-fructose = a ribonucleoside 5'-diphosphate + sucrose + H(+). Fructose acts as a non-competitive inhibitor with an inhibition constant of 17.2 mM. In contrast, glucose inhibits uncompetitively with an inhibition constant of 4.3 mM. Its function is as follows. Sucrose-cleaving enzyme that provides UDP-glucose and fructose for various metabolic pathways. This Daucus carota (Wild carrot) protein is Sucrose synthase isoform 1.